We begin with the raw amino-acid sequence, 198 residues long: Armadillo repeat-containing protein 7 (198 aa).

ARM repeat units lie at residues 57 to 99 (QVLD…QAGG) and 100 to 140 (LPLI…TSLP). Serine 169 carries the phosphoserine modification.

Component of the minor spliceosome. Within this complex, interacts with RBM48.

Functionally, as a component of the minor spliceosome, involved in the splicing of U12-type introns in pre-mRNAs. This Mus musculus (Mouse) protein is Armadillo repeat-containing protein 7 (Armc7).